The following is a 344-amino-acid chain: MRILGIETSCDETGVAIYDEDKGLIANQLYTQIALHADYGGVVPELASRDHIRKTAPLIEAALQEANLTAKDIDGIAYTCGPGLVGALLVGSTIARSLAYAWNVPAVGVHHMEGHLLAPMLEDADNRPQFPFIALLVSGGHTQLVKVEGVGKYEVMGESIDDAAGEAFDKTAKLLGLDYPGGAALSRLAEKGSAGRFVFPKPMTDRPGLDFSFSGLKTFAANTINQAIKNEGELSEQTKADIAHAFQTAVVETLAIKCKRALKETGYKRLVIAGGVSANKQLRQGLANLMDDLKGRVFYPAPQFCTDNGAMISYVGYLRLKHGERTDLAIEVKPRWPMIELEAI.

The Fe cation site is built by histidine 111 and histidine 115. Substrate contacts are provided by residues 136–140 (LVSGG), aspartate 169, glycine 182, and asparagine 279. Aspartate 307 is a Fe cation binding site.

Belongs to the KAE1 / TsaD family. Requires Fe(2+) as cofactor.

It localises to the cytoplasm. The catalysed reaction is L-threonylcarbamoyladenylate + adenosine(37) in tRNA = N(6)-L-threonylcarbamoyladenosine(37) in tRNA + AMP + H(+). Required for the formation of a threonylcarbamoyl group on adenosine at position 37 (t(6)A37) in tRNAs that read codons beginning with adenine. Is involved in the transfer of the threonylcarbamoyl moiety of threonylcarbamoyl-AMP (TC-AMP) to the N6 group of A37, together with TsaE and TsaB. TsaD likely plays a direct catalytic role in this reaction. The polypeptide is tRNA N6-adenosine threonylcarbamoyltransferase (Mannheimia succiniciproducens (strain KCTC 0769BP / MBEL55E)).